The sequence spans 179 residues: Interleukin-10 (179 aa).

The N-terminal stretch at 1-19 (MPSPALLCCCLVLLAGVGA) is a signal peptide. Cystine bridges form between cysteine 31–cysteine 127 and cysteine 81–cysteine 133. A glycan (N-linked (GlcNAc...) asparagine) is linked at asparagine 135.

The protein belongs to the IL-10 family. Homodimer. Interacts with IL10RA and IL10RB.

The protein localises to the secreted. Functionally, major immune regulatory cytokine that acts on many cells of the immune system where it has profound anti-inflammatory functions, limiting excessive tissue disruption caused by inflammation. Mechanistically, IL10 binds to its heterotetrameric receptor comprising IL10RA and IL10RB leading to JAK1 and STAT2-mediated phosphorylation of STAT3. In turn, STAT3 translocates to the nucleus where it drives expression of anti-inflammatory mediators. Targets antigen-presenting cells (APCs) such as macrophages and monocytes and inhibits their release of pro-inflammatory cytokines including granulocyte-macrophage colony-stimulating factor /GM-CSF, granulocyte colony-stimulating factor/G-CSF, IL-1 alpha, IL-1 beta, IL-6, IL-8 and TNF-alpha. Also interferes with antigen presentation by reducing the expression of MHC-class II and co-stimulatory molecules, thereby inhibiting their ability to induce T cell activation. In addition, controls the inflammatory response of macrophages by reprogramming essential metabolic pathways including mTOR signaling. This is Interleukin-10 (IL10) from Vulpes vulpes (Red fox).